Here is a 545-residue protein sequence, read N- to C-terminus: Carboxypeptidase N subunit 2 (545 aa).

An N-terminal signal peptide occupies residues M1–P21. Residues C22–P49 form the LRRNT domain. Residues N74, N111, and N119 are each glycosylated (N-linked (GlcNAc...) asparagine). LRR repeat units follow at residues R98 to N119, S122 to H143, A146 to P167, H170 to P191, S194 to K215, S218 to Q239, C242 to S263, N266 to H287, C290 to H311, N314 to D335, E338 to N359, and K362 to T383. Residue N228 is glycosylated (N-linked (GlcNAc...) asparagine). N-linked (GlcNAc...) asparagine glycosylation occurs at N266. Residues N348 and N359 are each glycosylated (N-linked (GlcNAc...) asparagine). Residues N395–V447 form the LRRCT domain. The N-linked (GlcNAc...) asparagine glycan is linked to N518.

In terms of assembly, tetramer of two catalytic chains and two glycosylated inactive chains. Whether or not any Cys residues participate in intrachain bonds is unknown, but they do not form interchain disulfide bonds with the 50 kDa catalytic subunit.

Its subcellular location is the secreted. In terms of biological role, the 83 kDa subunit binds and stabilizes the catalytic subunit at 37 degrees Celsius and keeps it in circulation. Under some circumstances it may be an allosteric modifier of the catalytic subunit. This chain is Carboxypeptidase N subunit 2 (CPN2), found in Homo sapiens (Human).